The following is a 369-amino-acid chain: Ubiquitin carboxyl-terminal hydrolase 12 (369 aa).

Residues 1 to 4 (MEIL) carry the Required for plasma membrane localization of USP12/WDR20 motif. The USP domain maps to 39-368 (FGLVNFGNTC…SGYILFYQSR (330 aa)). The active-site Nucleophile is cysteine 48. Positions 145–165 (KQEKQNGRLPNGNIDSENNST) are disordered. Zn(2+)-binding residues include cysteine 185, cysteine 188, cysteine 232, and cysteine 235. Catalysis depends on histidine 316, which acts as the Proton acceptor.

The protein belongs to the peptidase C19 family. USP12/USP46 subfamily. As to quaternary structure, interacts with WDR48. Interacts with WDR20; this interaction promotes translocation of the USP12 complex to the plasma membrane. Component of the USP12/WDR20/WDR48 deubiquitinating complex. Component of the USP12/WDR20/WDR48 deubiquitinating complex. Interacts with PHLPP1. Interacts with RBPJ. Interacts with CBP; this interaction blocks the acetyltransferase activity of CREBBP.

It localises to the nucleus. The protein localises to the cytoplasm. It is found in the cell membrane. The catalysed reaction is Thiol-dependent hydrolysis of ester, thioester, amide, peptide and isopeptide bonds formed by the C-terminal Gly of ubiquitin (a 76-residue protein attached to proteins as an intracellular targeting signal).. Activated by interaction with WDR20, WDR48 and DMWD through different allosteric mechanisms. In terms of biological role, deubiquitinating enzyme that plays various roles in the regulation of the immune response and inflammation. During TCR engagement and activation, translocates into the cytoplasm and deubiquitinates its substrates LAT and TRAT1 and prevents their lysosome-dependent degradation to stabilize the TCR signaling complex at the plasma membrane. Plays an essential role in the selective LPS-induced macrophage response through the activation of NF-kappa-B pathway. In addition, promotes that antiviral immune response through targeting DNA sensor IFI16 to inhibit its proteasome-dependent degradation. Participates in the interferon signaling pathway and antiviral response independently of its deubiquitinase activity by maintaining nuclear phosphorylated STAT1 levels via inhibition of its CREBBP-mediated acetylation and subsequent dephosphorylation. Plays an intrinsic role in promoting the differentiation, activation and proliferation of CD4(+) T-cell by activating the NF-kappa-B signaling pathway through deubiquitinating and stabilizing B-cell lymphoma/leukemia 10/BCL10. In myeloid-derived suppressor cells promotes the activation of the NF-kappa-B via deubiquitination and stabilization of RELA. Regulates the 'Lys-63'-linked polyubiquitin chains of BAX and thereby modulates the mitochondrial apoptotic process. Negative regulator of NOTCH signaling that specifically deubiquitinates non-activated NOTCH receptors to target them for lysosomal degradation; deubiquitination of NOTCH stimulates its transport form late endosomes to lysosomes. Protects neurons against HTT/huntingtin-induced polyglutamine expansion-dependent neurodegeneration through regulation of autophagic flux. This function is independent of deubiquitinase activity or of other components of the USP12-WDR20-WDR48 deubiquitinating complex. In complex with WDR48, acts as a potential tumor suppressor by positively regulating PHLPP1 stability. The protein is Ubiquitin carboxyl-terminal hydrolase 12 (USP12) of Bos taurus (Bovine).